Consider the following 277-residue polypeptide: uncharacterized protein (277 aa).

Residues 139 to 167 (TARELSLDCSCPDYAVPCKHLAATFYLLA) form an SWIM-type zinc finger.

This is an uncharacterized protein from Mycobacterium tuberculosis (strain ATCC 25618 / H37Rv).